The chain runs to 969 residues: Rab3 GTPase-activating protein catalytic subunit (969 aa).

The span at Asp532–Gly549 shows a compositional bias: basic and acidic residues. Positions Asp532–Thr613 are disordered. The segment covering Ala550–Trp572 has biased composition (low complexity). The segment covering Ser573 to Met589 has biased composition (acidic residues). A compositionally biased stretch (basic and acidic residues) spans Lys590–Leu608.

It belongs to the Rab3-GAP catalytic subunit family. As to quaternary structure, the Rab3 GTPase-activating complex is a heterodimer composed of rab3gap1 and rab3gap2. The Rab3 GTPase-activating complex interacts with DMXL2. Interacts with LMAN1.

It localises to the cytoplasm. The protein localises to the endoplasmic reticulum. Its subcellular location is the golgi apparatus. The protein resides in the cis-Golgi network. Functionally, catalytic subunit of the Rab3 GTPase-activating (Rab3GAP) complex composed of rab3gap1 and rab3gap2, which has GTPase-activating protein (GAP) activity towards various Rab3 subfamily members (RAB3A, RAB3B, RAB3C and RAB3D), RAB5A and RAB43, and guanine nucleotide exchange factor (GEF) activity towards RAB18. As part of the Rab3GAP complex, acts as a GAP for Rab3 proteins by converting active RAB3-GTP to the inactive form RAB3-GDP. Rab3 proteins are involved in regulated exocytosis of neurotransmitters and hormones. The Rab3GAP complex, acts as a GEF for RAB18 by promoting the conversion of inactive RAB18-GDP to the active form RAB18-GTP. Recruits and stabilizes RAB18 at the cis-Golgi membrane where RAB18 is most likely activated. Also involved in RAB18 recruitment at the endoplasmic reticulum (ER) membrane where it maintains proper ER structure. Required for normal eye and brain development. May participate in neurodevelopmental processes such as proliferation, migration and differentiation before synapse formation, and non-synaptic vesicular release of neurotransmitters. The polypeptide is Rab3 GTPase-activating protein catalytic subunit (rab3gap1) (Danio rerio (Zebrafish)).